The sequence spans 492 residues: uncharacterized protein (492 aa).

Helical transmembrane passes span 67–87 (VAIM…GGWL), 88–108 (ADRV…IMFG), 110–130 (IALA…LIIV), 157–177 (GFSI…LIVG), 185–205 (YHLG…VFAL), 232–252 (IGVI…VLTI), 255–275 (FIDL…IIMF), 294–314 (LFIG…ILAV), 333–353 (WFQS…AWLW), 367–387 (FSIG…PAMQ), 392–412 (LVSP…ELCL), 434–454 (SMWF…AGLF), and 464–484 (GTIG…SPVI).

It belongs to the major facilitator superfamily. Proton-dependent oligopeptide transporter (POT/PTR) (TC 2.A.17) family.

Its subcellular location is the cell membrane. This is an uncharacterized protein from Bacillus subtilis (strain 168).